The chain runs to 530 residues: TNF receptor-associated factor 6 (530 aa).

The interaction with TAX1BP1 stretch occupies residues 1–362 (MSLLNCENSC…EAQQCNGIYI (362 aa)). The RING-type; degenerate zinc-finger motif lies at 70 to 109 (CPICLMALREAVQTPCGHRFCKACITKSIRDAGHKCPVDN). K124 participates in a covalent cross-link: Glycyl lysine isopeptide (Lys-Gly) (interchain with G-Cter in SUMO); alternate. Residue K124 forms a Glycyl lysine isopeptide (Lys-Gly) (interchain with G-Cter in ubiquitin); alternate linkage. Residue K142 forms a Glycyl lysine isopeptide (Lys-Gly) (interchain with G-Cter in SUMO) linkage. 2 TRAF-type zinc fingers span residues 150–202 (DHQV…EEKE) and 203–259 (IHDQ…NHLA). The stretch at 302–356 (NYEETVKQLEGRLVRQDHQIRELTAKMETQSMHVSELKRTIRSLEDKVAEMEAQQ) forms a coiled coil. K327 is covalently cross-linked (Glycyl lysine isopeptide (Lys-Gly) (interchain with G-Cter in ubiquitin)). Positions 358–507 (NGIYIWKIGN…DDTLLVRCEV (150 aa)) constitute an MATH domain. Residues 363–530 (WKIGNFGMHL…FQPRSTDAGV (168 aa)) are interaction with TANK. K461 is covalently cross-linked (Glycyl lysine isopeptide (Lys-Gly) (interchain with G-Cter in SUMO)).

The protein belongs to the TNF receptor-associated factor family. A subfamily. As to quaternary structure, homotrimer. Homooligomer. N-terminal region is dimeric while C-terminal region is trimeric; maybe providing a mode of oligomerization. Upon IL1B treatment, forms a complex with PELI1, IRAK1, IRAK4 and MYD88; this complex recruits MAP3K7/TAK1, TAB1 and TAB2 to mediate NF-kappa-B activation. Direct binding of SMAD6 to PELI1 prevents the complex formation and hence negatively regulates IL1R-TLR signaling and eventually NF-kappa-B-mediated gene expression. Binds to TNFRSF5/CD40 and TNFRSF11A/RANK. Associates with NGFR, TNFRSF17, IRAK2, IRAK3, RIPK2, MAP3K1, MAP3K5, MAP3K14, CSK, TRAF, TRAF-interacting protein TRIP and TNF receptor associated protein TDP2. Interacts with IL17R. Interacts with SQSTM1 bridging NTRK1 and NGFR. Forms a ternary complex with SQSTM1 and PRKCZ. Interacts with PELI2 and PELI3. Binds UBE2V1. Interacts with TAX1BP1; this interaction mediates deubiquitination of TRAF6 and inhibition of NF-kappa-B activation. Interacts with ZNF675. Interacts with ARRB1 and ARRB2. Interacts with MAP3K7 and TAB1/MAP3K7IP1; during IL-1 signaling. Interacts with UBE2N. Interacts with TGFBR1, HDAC1 and RANGAP1. Interacts with AKT1, AKT2 and AKT3. Interacts (via TRAF domains) with NUMBL (via C-terminal). Interacts with RBCK1. Interacts with LIMD1 (via LIM domains). Interacts with RSAD2/viperin. Interacts (via C-terminus) with EIF2AK2/PKR (via the kinase catalytic domain). Interacts with ZFAND5. Interacts with IL1RL1. Interacts with TRAFD1. Interacts with AJUBA. Interacts with MAVS/IPS1. Interacts (via TRAF domains) with DYNC2I2 (via WD domains). Interacts with IFIT3 (via N-terminus). Interacts with TICAM2. Interacts with CARD14. Interacts with CD40 and MAP3K8; the interaction is required for ERK activation. Interacts with TICAM1 and this interaction is enhanced in the presence of WDFY1. Interacts with TANK; this interaction increases in response to DNA damage. Interacts with USP10; this interaction increases in response to DNA damage. Interacts with ZC3H12A; this interaction increases in response to DNA damage and is stimulated by TANK. Interacts with WDFY3. Interacts with TRIM13. Interacts with GPS2. Interacts (via C-terminus) with SASH1. Interacts with LRRC19. Interacts with IL17RA and TRAF3IP2. Interacts with TOMM70. Interacts with AMBRA1; interaction is required to mediate 'Lys-63'-linked ubiquitination of ULK1. Interacts with CRBN; this interaction inhibits TLR4-mediated signaling by preventing TRAF6-mediated ubiquitination of ECSIT. Post-translationally, sumoylated on Lys-124, Lys-142 and Lys-461 with SUMO1. Polyubiquitinated on Lys-124 by TRAF3IP2; after cell stimulation with IL17A. Polyubiquitinated; after cell stimulation with IL1B or TGFB. This ligand-induced cell stimulation leads to dimerization/oligomerization of TRAF6 molecules, followed by auto-ubiquitination which involves UBE2N and UBE2V1 and leads to TRAF6 activation. This 'Lys-63' site-specific poly-ubiquitination appears to be associated with the activation of signaling molecules. Endogenous autoubiquitination occurs only for the cytoplasmic form. Deubiquitinated by USP10 in a TANK-dependent manner, leading to the negative regulation of NF-kappa-B signaling upon DNA damage. LRRC19 induces 'Lys-63' ubiquitination. Ubiquitinated at Lys-327 by the SCF(FBXL2) complex, leading to its degradation by the proteasome.

Its subcellular location is the cytoplasm. The protein resides in the cell cortex. The protein localises to the nucleus. It localises to the lipid droplet. It carries out the reaction S-ubiquitinyl-[E2 ubiquitin-conjugating enzyme]-L-cysteine + [acceptor protein]-L-lysine = [E2 ubiquitin-conjugating enzyme]-L-cysteine + N(6)-ubiquitinyl-[acceptor protein]-L-lysine.. It functions in the pathway protein modification; protein ubiquitination. E3 ubiquitin ligase that, together with UBE2N and UBE2V1, mediates the synthesis of 'Lys-63'-linked-polyubiquitin chains conjugated to proteins, such as ECSIT, IKBKG, IRAK1, AKT1 and AKT2. Also mediates ubiquitination of free/unanchored polyubiquitin chain that leads to MAP3K7 activation. Leads to the activation of NF-kappa-B and JUN. Seems to also play a role in dendritic cells (DCs) maturation and/or activation. Represses c-Myb-mediated transactivation, in B-lymphocytes. Adapter protein that seems to play a role in signal transduction initiated via TNF receptor, IL-1 receptor and IL-17 receptor. Regulates osteoclast differentiation by mediating the activation of adapter protein complex 1 (AP-1) and NF-kappa-B, in response to RANK-L stimulation. Together with MAP3K8, mediates CD40 signals that activate ERK in B-cells and macrophages, and thus may play a role in the regulation of immunoglobulin production. Acts as a regulator of the JNK and NF-kappa-B signaling pathways by initiating assembly of heterotypic 'Lys-63'-/'Lys-48'-linked branched ubiquitin chains that are then recognized by TAB2: TRAF6 catalyzes initial 'Lys-63'-linked-polyubiquitin chains that are then branched via 'Lys-48'-linked polyubiquitin by HUWE1. 'Lys-63'-/'Lys-48'-linked branched ubiquitin chains protect 'Lys-63'-linkages from CYLD deubiquitination. Also participates in the TCR signaling by ubiquitinating LAT. This is TNF receptor-associated factor 6 (Traf6) from Rattus norvegicus (Rat).